The chain runs to 405 residues: Type III polyketide synthase 10 (405 aa).

Polar residues predominate over residues 1 to 18 (MVSTNAGGIASKQASSMA). A disordered region spans residues 1 to 20 (MVSTNAGGIASKQASSMAPN). Cys170 functions as the Nucleophile in the catalytic mechanism.

This sequence belongs to the thiolase-like superfamily. Chalcone/stilbene synthases family. As to quaternary structure, interacts with STS1. Expressed in adult flowers.

It localises to the endoplasmic reticulum. Functionally, plant type III polyketide synthases (PKSs) that catalyzes the condensation of fatty acyl-CoA with malonyl-CoA to generate triketide and tetraketide alpha-pyrones, the main components of pollen exine and potential sporopollenin precursors. May be involved in the synthesis of sporopollenin precursors in tapetal cells to regulate pollen wall formation. Required for exine and Ubisch body formation in anthers. Does not possess chalcone synthase (CHS) activity in vitro with the substrates 4-coumaroyl-CoA and malonyl-CoA. The chain is Type III polyketide synthase 10 from Oryza sativa subsp. japonica (Rice).